The sequence spans 838 residues: P protein (838 aa).

Topologically, residues 1 to 179 (MHLEGRDGRR…KLRRCVQWLK (179 aa)) are cytoplasmic. 2 disordered regions span residues 38–60 (LPRGAGGADPSHSCPRGAAGQSS) and 74–94 (KGRSHSSLPQMSSSRSKDSCF). A compositionally biased stretch (polar residues) spans 78–87 (HSSLPQMSSS). Residues 180–197 (VMGLFAFVVLCSILFSLY) traverse the membrane as a helical segment. Topologically, residues 198–330 (PDQGKLWQLL…QYLRGSVETQ (133 aa)) are extracellular. N-linked (GlcNAc...) asparagine glycans are attached at residues N214, N218, and N273. A helical transmembrane segment spans residues 331–347 (VTIATAILAGVYALIIF). The Cytoplasmic segment spans residues 348 to 353 (EIVHRT). Residues 354-370 (LAAMLGSLAALAALAVI) traverse the membrane as a helical segment. The Extracellular segment spans residues 371-384 (GDRPSLTHVVEWID). Residues 385-401 (FETLALLFGMMILVAIF) traverse the membrane as a helical segment. At 402–423 (SETGFFDYCAVKAYRLSRGRVW) the chain is on the cytoplasmic side. Residues 424–440 (AMIIMLCLIAAVLSAFL) traverse the membrane as a helical segment. Topologically, residues 441–513 (DNVTTMLLFT…DFAGFTAHMF (73 aa)) are extracellular. N442 is a glycosylation site (N-linked (GlcNAc...) asparagine). The helical transmembrane segment at 514–530 (IGICLVLLVCFPLLRLL) threads the bilayer. Residues 531–620 (YWNRKLYNKE…LQKKHRISDG (90 aa)) are Cytoplasmic-facing. Residues 621 to 637 (ILLAKCLTVLGFVIFMF) traverse the membrane as a helical segment. The Extracellular segment spans residues 638–647 (FLNSFVPGIH). A helical transmembrane segment spans residues 648-664 (LDLGWIAILGAIWLLIL). Topologically, residues 665 to 679 (ADIHDFEIILHRVEW) are cytoplasmic. The helical transmembrane segment at 680–696 (ATLLFFAALFVLMEALA) threads the bilayer. At 697 to 720 (HLHLIEYVGEQTALLIKMVPEEQR) the chain is on the extracellular side. Residues 721–737 (LIAAIVLVVWVSALASS) traverse the membrane as a helical segment. The Cytoplasmic portion of the chain corresponds to 738 to 760 (LIDNIPFTATMIPVLLNLSHDPE). Residues 761 to 777 (VGLPAPPLMYALAFGAC) form a helical membrane-spanning segment. The Extracellular portion of the chain corresponds to 778–817 (LGGNGTLIGASANVVCAGIAEQHGYGFSFMEFFRLGFPMM). Residue N781 is glycosylated (N-linked (GlcNAc...) asparagine). A helical transmembrane segment spans residues 818-834 (VVSCTVGMCYLLVAHVV). Over 835-838 (VGWN) the chain is Cytoplasmic.

Belongs to the CitM (TC 2.A.11) transporter family. In terms of tissue distribution, expressed in melanocytes and retinal pigment epithelium.

The protein localises to the melanosome membrane. It catalyses the reaction chloride(in) = chloride(out). Its function is as follows. Contributes to a melanosome-specific anion (chloride) current that modulates melanosomal pH for optimal tyrosinase activity required for melanogenesis and the melanosome maturation. One of the components of the mammalian pigmentary system. May serve as a key control point at which ethnic skin color variation is determined. Major determinant of brown and/or blue eye color. Seems to regulate the post-translational processing of tyrosinase, which catalyzes the limiting reaction in melanin synthesis. The sequence is that of P protein from Homo sapiens (Human).